The sequence spans 302 residues: Protein FLOURY 1 (302 aa).

2 consecutive transmembrane segments (helical) span residues Ser-27 to Leu-47 and Leu-82 to Val-102. Residues Ser-160–Val-195 form a disordered region. Residues Phe-172 to Asp-192 are compositionally biased toward acidic residues. Residues Gly-193–Arg-299 enclose the GTD-binding domain. Residues Arg-199 to Met-254 are a coiled coil. A disordered region spans residues Pro-283–Lys-302.

Interacts (via C-terminus) with both 22 kDa and 19 kDa alpha-zeins. Interacts (via C-terminus) with OP10 (via N-terminus). In terms of tissue distribution, expressed in endosperm. Not detected in embryo, leaves and roots.

The protein resides in the endoplasmic reticulum membrane. Involved in protein body development and 22 kDa alpha-zein localization. The chain is Protein FLOURY 1 from Zea mays (Maize).